A 479-amino-acid polypeptide reads, in one-letter code: Heparin cofactor 2 (479 aa).

The first 23 residues, 1–23 (MKHPAYTLLLSLIMSMCAGSKGL), serve as a signal peptide directing secretion. Asparagine 31 is a glycosylation site (N-linked (GlcNAc...) asparagine). Repeat copies occupy residues 55–65 (GEEDDDYLDLE) and 69–79 (SEDDDYIYVVD). A 2 X 11 AA approximate repeats, Asp/Glu-rich (acidic) (hirudin-like) region spans residues 55–79 (GEEDDDYLDLEKLLSEDDDYIYVVD). Sulfotyrosine occurs at positions 61 and 74. Asparagine 168 carries N-linked (GlcNAc...) asparagine glycosylation. Residues 172–192 (KYEVTTIHNLFRKLTHRLFRR) are glycosaminoglycan-binding site. N-linked (GlcNAc...) asparagine glycosylation is found at asparagine 367 and asparagine 403.

It belongs to the serpin family. In terms of processing, different composition of the N-linked oligosaccharides appears to yield a 68-kDa and a 72-kDa form.

Functionally, thrombin inhibitor activated by the glycosaminoglycans, heparin or dermatan sulfate. In the presence of the latter, HC-II becomes the predominant thrombin inhibitor in place of antithrombin III (AT). In Rattus norvegicus (Rat), this protein is Heparin cofactor 2 (Serpind1).